Consider the following 1219-residue polypeptide: Disease resistance-like protein DSC1 (1219 aa).

In terms of domain architecture, TIR spans 9 to 176; sequence AEFDVFLSFR…EIAVDTFKKL (168 aa). The active site involves Glu83. An NB-ARC domain is found at 197 to 446; sequence LEKLLSWEDL…DIACFFRSEN (250 aa). 216–222 lines the ATP pocket; that stretch reads GMVGIGK. 11 LRR repeats span residues 468–493, 538–563, 597–619, 620–642, 665–689, 690–713, 733–757, 759–780, 804–827, 854–877, and 878–899; these read LVDK…MAKE, TDKI…AFQG, PNEL…DFDP, KNLV…EKDV, AHNL…INCL, EKLI…IKTQ, SENV…QTFR, LALL…LYKL, MESL…MHLS, CSRL…IGGL, and SSLQ…SFNQ.

Belongs to the disease resistance NB-LRR family. Interacts with CAMTA3 and DSC2.

The catalysed reaction is NAD(+) + H2O = ADP-D-ribose + nicotinamide + H(+). In terms of biological role, TIR-NB-LRR receptor-like protein involved in plant defense. Acts as a trigger of hypersensitive response (HR). Functions as a guard of CAMTA3, a negative regulator of immunity, during pathogen infection. This chain is Disease resistance-like protein DSC1, found in Arabidopsis thaliana (Mouse-ear cress).